We begin with the raw amino-acid sequence, 511 residues long: Glucans biosynthesis protein G (511 aa).

A signal peptide spans 1 to 22 (MMKMRWLGAAIMLTLYASSSWA).

Belongs to the OpgD/OpgG family.

The protein resides in the periplasm. Its pathway is glycan metabolism; osmoregulated periplasmic glucan (OPG) biosynthesis. Its function is as follows. Involved in the biosynthesis of osmoregulated periplasmic glucans (OPGs). The protein is Glucans biosynthesis protein G of Salmonella enteritidis PT4 (strain P125109).